Here is a 478-residue protein sequence, read N- to C-terminus: Zinc finger protein 410 (478 aa).

2 disordered regions span residues 84-113 (PDGEETRAQTVQKSPEFLTTPESPSLLQDL) and 187-214 (NAKTGSNGENVHLGSGDGQPKDSGPLPQ). Over residues 103-113 (TPESPSLLQDL) the composition is skewed to polar residues. C2H2-type zinc fingers lie at residues 219 to 243 (LKCTVEGCDRTFVWPAHFKYHLKTH), 249 to 273 (FICPAEGCGKSFYVLQRLKVHMRTH), 279 to 303 (FMCHESGCGKQFTTAGNLKNHRRIH), 309 to 333 (FLCEAQGCGRSFAEYSSLRKHLVVH), and 339 to 362 (HQCQVCGKTFSQSGSRNVHMRKHH). The Zn(2+) site is built by C221, C226, H239, H243, C251, C256, H269, H273, C281, C286, H299, H303, C311, C316, H329, H333, C341, C344, H357, and H361.

In terms of assembly, interacts with CDKN2A/p14ARF. Post-translationally, O-glycosylated. O-GlcNAcylation may occur in response to increasing glucose levels and affect transcription factor activity. Sumoylated. Sumoylation increases its half-life, possibly by blocking ubiquitin-mediated degradation.

It is found in the nucleus. The protein localises to the chromosome. Transcription factor that binds to the sequence motif 5'-CATCCCATAATA-3', and is specifically required to silence expression of fetal hemoglobin in adult erythroid cells. Prevents expression of fetal hemoglobin genes HBG1 and HBG2 through CHD4: acts as a direct transcriptional activator of CHD4, a central component of the NuRD complex that represses transcription of fetal hemoglobin genes HBG1 and HBG2 in erythroid cells. May also activate transcription of matrix-remodeling genes such as MMP1 during fibroblast senescence. May activate transcription of the gap junction gene GJC1, perhaps in response to increasing glucose. However, recent studies suggest that ZNF410 is dedicated to regulate expression of a single gene: CHD4. In Mus musculus (Mouse), this protein is Zinc finger protein 410.